Consider the following 31-residue polypeptide: Photosystem II reaction center protein T (31 aa).

The chain crosses the membrane as a helical span at residues 3-23 (ALVYVFLLVGTLMVIFFAIFF).

It belongs to the PsbT family. In terms of assembly, PSII is composed of 1 copy each of membrane proteins PsbA, PsbB, PsbC, PsbD, PsbE, PsbF, PsbH, PsbI, PsbJ, PsbK, PsbL, PsbM, PsbT, PsbX, PsbY, PsbZ, Psb30/Ycf12, at least 3 peripheral proteins of the oxygen-evolving complex and a large number of cofactors. It forms dimeric complexes.

The protein resides in the plastid. The protein localises to the chloroplast thylakoid membrane. Found at the monomer-monomer interface of the photosystem II (PS II) dimer, plays a role in assembly and dimerization of PSII. PSII is a light-driven water plastoquinone oxidoreductase, using light energy to abstract electrons from H(2)O, generating a proton gradient subsequently used for ATP formation. The polypeptide is Photosystem II reaction center protein T (Gracilaria tenuistipitata var. liui (Red alga)).